Reading from the N-terminus, the 260-residue chain is ProSAAS (260 aa).

An N-terminal signal peptide occupies residues 1–33 (MAGSPLLCGPRAGGVGLLVLLLLGLLRLPPTLS). Residues 34 to 215 (ARPVKEPRSL…SSEPEAAPAP (182 aa)) are proSAAS(1-180). 2 disordered regions span residues 162 to 187 (AALRPRPPVYDDGPTGPDVEDAADET) and 206 to 234 (SSEPEAAPAPRRLRRAVDQDLGPEVPPEN). The C-terminal inhibitory domain; interacts with PCSK1 stretch occupies residues 221–260 (AVDQDLGPEVPPENVLGALLRVKRLENSSPQAPARRLLPP). Positions 239–244 (LLRVKR) match the Sufficient for inhibition of PCSK1 motif.

As to quaternary structure, interacts via the C-terminal inhibitory domain with PCSK1 65 kDa form. In terms of processing, proteolytically cleaved in the Golgi. Big SAAS, Little SAAS, PEN and Big LEN are the major processed peptides in proSAAS-overexpressing PC-12 phaeochromocytoma cells (lacking PCSK1 and PCSK2 endopeptidases). Peptides corresponding to PEN and a proSAAS aa 40-59 have been detected in wild-type PC-12 cells. In terms of tissue distribution, expressed in adult brain (all major structural regions), adrenal gland (medulla) and spinal cord (dorsal and ventral horn). Expressed in pancreatic islands.

The protein resides in the secreted. The protein localises to the golgi apparatus. It localises to the trans-Golgi network. May function in the control of the neuroendocrine secretory pathway. Proposed be a specific endogenous inhibitor of PCSK1. ProSAAS and Big PEN-LEN, both containing the C-terminal inhibitory domain, but not the processed peptides reduce PCSK1 activity in the endoplasmic reticulum and Golgi. It reduces the activity of the 87 kDa form but not the autocatalytically derived 65 kDa form of PCSK1. Subsequent processing of proSAAS may eliminate the inhibition. Slows down convertase-mediated processing of proopiomelanocortin and proenkephalin. May control the intracellular timing of PCSK1 rather than its total level of activity. Its function is as follows. Endogenous ligand for GPR171. Neuropeptide involved in the regulation of feeding. The polypeptide is ProSAAS (Pcsk1n) (Rattus norvegicus (Rat)).